Here is a 410-residue protein sequence, read N- to C-terminus: Phosphoserine phosphatase (410 aa).

One can recognise an ACT domain in the interval 13-91 (LVKIFGKDRP…QAEIISGIGD (79 aa)). The active-site Nucleophile is the Asp-187. Mg(2+) is bound by residues Asp-187 and Asp-189. Asp-189 serves as the catalytic Proton donor. Residues Glu-196, Arg-232, 275–276 (SG), and Lys-320 each bind substrate. Asp-343 serves as a coordination point for Mg(2+). Asn-346 contributes to the substrate binding site.

This sequence belongs to the HAD-like hydrolase superfamily. SerB family. Requires Mg(2+) as cofactor.

It carries out the reaction O-phospho-L-serine + H2O = L-serine + phosphate. The enzyme catalyses O-phospho-D-serine + H2O = D-serine + phosphate. Its pathway is amino-acid biosynthesis; L-serine biosynthesis; L-serine from 3-phospho-D-glycerate: step 3/3. In terms of biological role, catalyzes the dephosphorylation of phosphoserine (P-Ser) in vitro. Also catalyzes the dephosphorylation of phosphothreonine (P-Thr) in vitro. The sequence is that of Phosphoserine phosphatase from Streptomyces coelicolor (strain ATCC BAA-471 / A3(2) / M145).